A 440-amino-acid polypeptide reads, in one-letter code: Protein CyaD (440 aa).

Residues 1–55 (MRRALRELAARHGRVLAASWRQRHRRPAGWFDPVETEFLPSALSLQERPISPTAR) are Cytoplasmic-facing. Residues 56–75 (WLARILMALAAGALVWSVVG) traverse the membrane as a helical segment. Topologically, residues 76 to 440 (KTEIVVHAAG…RHAGESLGER (365 aa)) are periplasmic.

This sequence belongs to the membrane fusion protein (MFP) (TC 8.A.1) family.

The protein localises to the cell inner membrane. Its function is as follows. CyaD is necessary for transport of calmodulin-sensitive adenylate cyclase-hemolysin (cyclolysin). In Bordetella pertussis (strain ATCC 9797 / DSM 5571 / CCUG 30873 / LMG 14455 / NCTC 10739 / 18323), this protein is Protein CyaD (cyaD).